Reading from the N-terminus, the 328-residue chain is RNA binding protein fox-1 homolog 3 (328 aa).

Over residues 1 to 30 (MAQPYPPAQYPPPPQNGIPAEYAPPPPHPT) the composition is skewed to pro residues. The segment at 1–106 (MAQPYPPAQY…QPKRLHVSNI (106 aa)) is disordered. Residues 49–87 (TPAQTHPEQPSSDTSTQPITGAQTVPQTDEAAQTDSQPL) show a composition bias toward polar residues. Residues 99-172 (KRLHVSNIPF…NPVVGAVYGP (74 aa)) enclose the RRM domain. Arg192 carries the asymmetric dimethylarginine; alternate modification. Arg192 is subject to Omega-N-methylarginine; alternate. The residue at position 288 (Arg288) is an Asymmetric dimethylarginine.

It localises to the nucleus. The protein localises to the cytoplasm. Pre-mRNA alternative splicing regulator. Regulates alternative splicing of RBFOX2 to enhance the production of mRNA species that are targeted for nonsense-mediated decay (NMD). This chain is RNA binding protein fox-1 homolog 3 (RBFOX3), found in Bos taurus (Bovine).